The sequence spans 325 residues: Acetyl-coenzyme A carboxylase carboxyl transferase subunit alpha (325 aa).

Positions 43–297 (ELENNSTQLR…KTSLIAHLRQ (255 aa)) constitute a CoA carboxyltransferase C-terminal domain.

It belongs to the AccA family. In terms of assembly, acetyl-CoA carboxylase is a heterohexamer composed of biotin carboxyl carrier protein (AccB), biotin carboxylase (AccC) and two subunits each of ACCase subunit alpha (AccA) and ACCase subunit beta (AccD).

The protein localises to the cytoplasm. The enzyme catalyses N(6)-carboxybiotinyl-L-lysyl-[protein] + acetyl-CoA = N(6)-biotinyl-L-lysyl-[protein] + malonyl-CoA. Its pathway is lipid metabolism; malonyl-CoA biosynthesis; malonyl-CoA from acetyl-CoA: step 1/1. Its function is as follows. Component of the acetyl coenzyme A carboxylase (ACC) complex. First, biotin carboxylase catalyzes the carboxylation of biotin on its carrier protein (BCCP) and then the CO(2) group is transferred by the carboxyltransferase to acetyl-CoA to form malonyl-CoA. In Cyanothece sp. (strain PCC 7425 / ATCC 29141), this protein is Acetyl-coenzyme A carboxylase carboxyl transferase subunit alpha.